A 332-amino-acid chain; its full sequence is Ribose-phosphate pyrophosphokinase (332 aa).

Residue Asp55–Glu57 coordinates ATP. 2 residues coordinate Mg(2+): His148 and Asp187. Lys211 is a catalytic residue. D-ribose 5-phosphate contacts are provided by residues Arg213, Asp237, and Asp241–Thr245.

This sequence belongs to the ribose-phosphate pyrophosphokinase family. Class I subfamily. As to quaternary structure, homohexamer. Mg(2+) serves as cofactor.

Its subcellular location is the cytoplasm. The catalysed reaction is D-ribose 5-phosphate + ATP = 5-phospho-alpha-D-ribose 1-diphosphate + AMP + H(+). It functions in the pathway metabolic intermediate biosynthesis; 5-phospho-alpha-D-ribose 1-diphosphate biosynthesis; 5-phospho-alpha-D-ribose 1-diphosphate from D-ribose 5-phosphate (route I): step 1/1. In terms of biological role, involved in the biosynthesis of the central metabolite phospho-alpha-D-ribosyl-1-pyrophosphate (PRPP) via the transfer of pyrophosphoryl group from ATP to 1-hydroxyl of ribose-5-phosphate (Rib-5-P). This chain is Ribose-phosphate pyrophosphokinase, found in Prochlorococcus marinus (strain MIT 9313).